Reading from the N-terminus, the 564-residue chain is Asparagine synthetase domain-containing protein CG17486 (564 aa).

Cysteine 2 acts as the Nucleophile in catalysis. The Glutamine amidotransferase type-2 domain occupies 2–180; that stretch reads CGIFCSVVNN…PLGLFRVKLN (179 aa). One can recognise an Asparagine synthetase domain in the interval 280-541; it reads PFCRLCMQKL…GLRDVVFLKK (262 aa).

The chain is Asparagine synthetase domain-containing protein CG17486 from Drosophila melanogaster (Fruit fly).